Consider the following 219-residue polypeptide: Uracil-DNA glycosylase (219 aa).

The active-site Proton acceptor is the D61.

This sequence belongs to the uracil-DNA glycosylase (UDG) superfamily. UNG family.

It is found in the cytoplasm. The catalysed reaction is Hydrolyzes single-stranded DNA or mismatched double-stranded DNA and polynucleotides, releasing free uracil.. Its function is as follows. Excises uracil residues from the DNA which can arise as a result of misincorporation of dUMP residues by DNA polymerase or due to deamination of cytosine. The polypeptide is Uracil-DNA glycosylase (Haemophilus influenzae (strain PittEE)).